A 368-amino-acid polypeptide reads, in one-letter code: Ribosomal RNA large subunit methyltransferase M (368 aa).

S-adenosyl-L-methionine-binding positions include S189, 222 to 225 (CPGG), D241, D261, and D278. K307 acts as the Proton acceptor in catalysis.

This sequence belongs to the class I-like SAM-binding methyltransferase superfamily. RNA methyltransferase RlmE family. RlmM subfamily. Monomer.

Its subcellular location is the cytoplasm. The catalysed reaction is cytidine(2498) in 23S rRNA + S-adenosyl-L-methionine = 2'-O-methylcytidine(2498) in 23S rRNA + S-adenosyl-L-homocysteine + H(+). In terms of biological role, catalyzes the 2'-O-methylation at nucleotide C2498 in 23S rRNA. This is Ribosomal RNA large subunit methyltransferase M from Yersinia enterocolitica serotype O:8 / biotype 1B (strain NCTC 13174 / 8081).